The chain runs to 424 residues: Enolase (424 aa).

Residue Q162 participates in (2R)-2-phosphoglycerate binding. Residue E204 is the Proton donor of the active site. Mg(2+) contacts are provided by D241, E284, and D311. Residues K336, R365, S366, and K387 each contribute to the (2R)-2-phosphoglycerate site. K336 serves as the catalytic Proton acceptor.

This sequence belongs to the enolase family. It depends on Mg(2+) as a cofactor.

The protein localises to the cytoplasm. It localises to the secreted. The protein resides in the cell surface. It catalyses the reaction (2R)-2-phosphoglycerate = phosphoenolpyruvate + H2O. It functions in the pathway carbohydrate degradation; glycolysis; pyruvate from D-glyceraldehyde 3-phosphate: step 4/5. Its function is as follows. Catalyzes the reversible conversion of 2-phosphoglycerate (2-PG) into phosphoenolpyruvate (PEP). It is essential for the degradation of carbohydrates via glycolysis. This is Enolase from Rhizobium leguminosarum bv. trifolii (strain WSM2304).